Here is a 198-residue protein sequence, read N- to C-terminus: Holliday junction resolvase RecU (198 aa).

The segment at 1–22 (MVNYPHKVSSQKRQTSLSQPKN) is disordered. Residues 11-22 (QKRQTSLSQPKN) show a composition bias toward polar residues. Mg(2+) contacts are provided by threonine 81, aspartate 83, glutamate 96, and glutamine 115.

Belongs to the RecU family. Mg(2+) serves as cofactor.

The protein localises to the cytoplasm. It carries out the reaction Endonucleolytic cleavage at a junction such as a reciprocal single-stranded crossover between two homologous DNA duplexes (Holliday junction).. Endonuclease that resolves Holliday junction intermediates in genetic recombination. Cleaves mobile four-strand junctions by introducing symmetrical nicks in paired strands. Promotes annealing of linear ssDNA with homologous dsDNA. Required for DNA repair, homologous recombination and chromosome segregation. In Streptococcus pneumoniae serotype 2 (strain D39 / NCTC 7466), this protein is Holliday junction resolvase RecU.